The following is a 269-amino-acid chain: uncharacterized protein (269 aa).

103–110 (GIFTMGKS) is an ATP binding site.

This is an uncharacterized protein from Mycoplasma pneumoniae (strain ATCC 29342 / M129 / Subtype 1) (Mycoplasmoides pneumoniae).